A 363-amino-acid polypeptide reads, in one-letter code: Phospho-N-acetylmuramoyl-pentapeptide-transferase (363 aa).

Transmembrane regions (helical) follow at residues 27 to 47 (SGCA…PFIA), 76 to 96 (TMGG…WADL), 97 to 117 (TNGF…VGFA), 137 to 157 (LGCE…LTPP), 171 to 191 (VLLP…TGFG), 202 to 222 (GLAI…SYLV), 242 to 262 (LAVF…FNAP), 265 to 285 (AVFM…AVAV), 292 to 312 (VLCI…IQIF), and 340 to 360 (KIVI…LATL).

This sequence belongs to the glycosyltransferase 4 family. MraY subfamily. Requires Mg(2+) as cofactor.

It is found in the cell inner membrane. The catalysed reaction is UDP-N-acetyl-alpha-D-muramoyl-L-alanyl-gamma-D-glutamyl-meso-2,6-diaminopimeloyl-D-alanyl-D-alanine + di-trans,octa-cis-undecaprenyl phosphate = di-trans,octa-cis-undecaprenyl diphospho-N-acetyl-alpha-D-muramoyl-L-alanyl-D-glutamyl-meso-2,6-diaminopimeloyl-D-alanyl-D-alanine + UMP. It functions in the pathway cell wall biogenesis; peptidoglycan biosynthesis. Its function is as follows. Catalyzes the initial step of the lipid cycle reactions in the biosynthesis of the cell wall peptidoglycan: transfers peptidoglycan precursor phospho-MurNAc-pentapeptide from UDP-MurNAc-pentapeptide onto the lipid carrier undecaprenyl phosphate, yielding undecaprenyl-pyrophosphoryl-MurNAc-pentapeptide, known as lipid I. The polypeptide is Phospho-N-acetylmuramoyl-pentapeptide-transferase (Gluconobacter oxydans (strain 621H) (Gluconobacter suboxydans)).